The chain runs to 505 residues: ATP synthase subunit alpha (505 aa).

Position 169-176 (169-176) interacts with ATP; the sequence is GDRQIGKT.

It belongs to the ATPase alpha/beta chains family. As to quaternary structure, F-type ATPases have 2 components, CF(1) - the catalytic core - and CF(0) - the membrane proton channel. CF(1) has five subunits: alpha(3), beta(3), gamma(1), delta(1), epsilon(1). CF(0) has three main subunits: a(1), b(2) and c(9-12). The alpha and beta chains form an alternating ring which encloses part of the gamma chain. CF(1) is attached to CF(0) by a central stalk formed by the gamma and epsilon chains, while a peripheral stalk is formed by the delta and b chains.

Its subcellular location is the cell inner membrane. The catalysed reaction is ATP + H2O + 4 H(+)(in) = ADP + phosphate + 5 H(+)(out). Functionally, produces ATP from ADP in the presence of a proton gradient across the membrane. The alpha chain is a regulatory subunit. The sequence is that of ATP synthase subunit alpha from Desulfatibacillum aliphaticivorans.